Reading from the N-terminus, the 317-residue chain is Gluconeogenesis factor (317 aa).

Belongs to the gluconeogenesis factor family.

It is found in the cytoplasm. In terms of biological role, required for morphogenesis under gluconeogenic growth conditions. Required, in gluconeogenic growth conditions, for the correct localization of PBP1 and hence for displaying a normal rod shape. The polypeptide is Gluconeogenesis factor (mgfK) (Bacillus subtilis (strain 168)).